The following is a 306-amino-acid chain: Type 2A encapsulin shell protein SrpI (306 aa).

Belongs to the encapsulin family. Family 2A subfamily. The 24.5 nm encapsulin nanocompartment is formed by 60 subunits; monomers form pentamers which assemble to form shells. There are 12 positively charged pores where the pentamers meet with a minimal pore diameter of 3.7 Angstroms as well 3-fold axis channels and dimer channels.

It is found in the encapsulin nanocompartment. Functionally, shell component of a type 2A encapsulin nanocompartment. Expression in E.coli generates nanocompartments with an average diameter of 25 nm. They can be disassembled by treatment with 6M guanidine hydrochloride and reassembled with cargo. The nanocompartment is probably involved in sulfur metabolism. Probably allows passage of cysteine into its interior; during growth in light the physiological pH is 8-8.4, about 30-54% of free cysteine (charge -1) would be able to pass through the shell. This is Type 2A encapsulin shell protein SrpI from Synechococcus elongatus (strain ATCC 33912 / PCC 7942 / FACHB-805) (Anacystis nidulans R2).